The primary structure comprises 64 residues: Conotoxin Pu3.5 (64 aa).

The signal sequence occupies residues 1 to 16 (LGVLLTICLLLFPLTA). The propeptide occupies 17–49 (VPLDGDQPADQPAGRMQDDISSEQHPFFDPVKR). 3 disulfides stabilise this stretch: Cys-50–Cys-63, Cys-51–Cys-58, and Cys-54–Cys-62.

This sequence belongs to the conotoxin M superfamily. Expressed by the venom duct.

The protein localises to the secreted. The polypeptide is Conotoxin Pu3.5 (Conus pulicarius (Flea-bitten cone)).